The primary structure comprises 395 residues: Zinc-regulated GTPase metalloprotein activator 1A (395 aa).

The segment at 1–22 is disordered; it reads MLPAVGSADEEEDPAEEDCPEL. Over residues 8-20 the composition is skewed to acidic residues; the sequence is ADEEEDPAEEDCP. A psi-PxLVp motif motif is present at residues 17 to 24; it reads EDCPELVP. 49-56 contributes to the GTP binding site; that stretch reads GYLGAGKT. Zn(2+) is bound by residues C107, C109, and C110. The CXCC motif motif lies at 107–110; sequence CLCC. GTP-binding positions include 110–114 and 203–206; these read CSVKD and NKTD. A CobW C-terminal domain is found at 274–377; it reads IVTITFEVPG…ILKQLFIATV (104 aa).

This sequence belongs to the SIMIBI class G3E GTPase family. ZNG1 subfamily. Ubiquitously expressed. Up-regulated in cultured astrocytes treated with dopamine.

Its subcellular location is the nucleus. The catalysed reaction is GTP + H2O = GDP + phosphate + H(+). Functionally, zinc chaperone that directly transfers zinc cofactor to target metalloproteins, thereby activating them. Catalyzes zinc insertion into the active site of methionine aminopeptidase METAP1, which function to cleave the initiator methionine from polypeptides during or after protein translation. Mechanistically, the N-terminal psi-PxLVp motif binds to the C6H2-type zinc finger of inactive form of METAP1. After formation of the docked complex, zinc is transferred from the CXCC motif in the GTPase domain of ZNG1A to the zinc binding site in the peptidase domain of METAP1 in a process requiring GTP hydrolysis. GTP/GDP exchange is required for release of active METAP1. In Homo sapiens (Human), this protein is Zinc-regulated GTPase metalloprotein activator 1A.